A 302-amino-acid polypeptide reads, in one-letter code: Melibiose operon regulatory protein (302 aa).

The HTH araC/xylS-type domain maps to 194 to 292 (SQMLGFIAEN…GMSPQQYRKL (99 aa)). 2 consecutive DNA-binding regions (H-T-H motif) follow at residues 211–232 (NDVA…QRVM) and 259–282 (ILDI…GKYV).

Its function is as follows. Transcription activator for the expression of the melAB operon. MelR binds at two sites located upstream of the melAB transcription site. The polypeptide is Melibiose operon regulatory protein (melR) (Escherichia coli O6:H1 (strain CFT073 / ATCC 700928 / UPEC)).